A 153-amino-acid chain; its full sequence is 6,7-dimethyl-8-ribityllumazine synthase (153 aa).

5-amino-6-(D-ribitylamino)uracil-binding positions include F22, 56–58 (AFE), and 80–82 (TVI). 85 to 86 (ST) contributes to the (2S)-2-hydroxy-3-oxobutyl phosphate binding site. H88 (proton donor) is an active-site residue. A 5-amino-6-(D-ribitylamino)uracil-binding site is contributed by F113. R127 contributes to the (2S)-2-hydroxy-3-oxobutyl phosphate binding site.

Belongs to the DMRL synthase family. As to quaternary structure, forms an icosahedral capsid composed of 60 subunits, arranged as a dodecamer of pentamers.

The enzyme catalyses (2S)-2-hydroxy-3-oxobutyl phosphate + 5-amino-6-(D-ribitylamino)uracil = 6,7-dimethyl-8-(1-D-ribityl)lumazine + phosphate + 2 H2O + H(+). It participates in cofactor biosynthesis; riboflavin biosynthesis; riboflavin from 2-hydroxy-3-oxobutyl phosphate and 5-amino-6-(D-ribitylamino)uracil: step 1/2. In terms of biological role, catalyzes the formation of 6,7-dimethyl-8-ribityllumazine by condensation of 5-amino-6-(D-ribitylamino)uracil with 3,4-dihydroxy-2-butanone 4-phosphate. This is the penultimate step in the biosynthesis of riboflavin. The chain is 6,7-dimethyl-8-ribityllumazine synthase from Actinobacillus pleuropneumoniae serotype 7 (strain AP76).